The chain runs to 264 residues: 4-hydroxy-tetrahydrodipicolinate reductase (264 aa).

8–13 contributes to the NAD(+) binding site; sequence GPRGKM. K36 is an NADP(+) binding site. Residues 97 to 99 and 123 to 126 each bind NAD(+); these read GTT and APNF. The active-site Proton donor/acceptor is H153. H154 provides a ligand contact to (S)-2,3,4,5-tetrahydrodipicolinate. Residue K157 is the Proton donor of the active site. 163–164 is a (S)-2,3,4,5-tetrahydrodipicolinate binding site; the sequence is GT.

It belongs to the DapB family.

It localises to the cytoplasm. The enzyme catalyses (S)-2,3,4,5-tetrahydrodipicolinate + NAD(+) + H2O = (2S,4S)-4-hydroxy-2,3,4,5-tetrahydrodipicolinate + NADH + H(+). The catalysed reaction is (S)-2,3,4,5-tetrahydrodipicolinate + NADP(+) + H2O = (2S,4S)-4-hydroxy-2,3,4,5-tetrahydrodipicolinate + NADPH + H(+). Its pathway is amino-acid biosynthesis; L-lysine biosynthesis via DAP pathway; (S)-tetrahydrodipicolinate from L-aspartate: step 4/4. In terms of biological role, catalyzes the conversion of 4-hydroxy-tetrahydrodipicolinate (HTPA) to tetrahydrodipicolinate. In Halalkalibacterium halodurans (strain ATCC BAA-125 / DSM 18197 / FERM 7344 / JCM 9153 / C-125) (Bacillus halodurans), this protein is 4-hydroxy-tetrahydrodipicolinate reductase.